A 729-amino-acid chain; its full sequence is Isocitrate dehydrogenase [NADP] (729 aa).

2 residues coordinate NADP(+): N83 and S85. The D-threo-isocitrate site is built by S121, N124, R128, R134, and K244. Residue N124 coordinates NADP(+). Residue D337 participates in Mg(2+) binding. Y407 and R534 together coordinate D-threo-isocitrate. Mg(2+)-binding residues include D535 and D539. NADP(+) contacts are provided by S572, H576, R587, D589, and R636.

It belongs to the monomeric-type IDH family. As to quaternary structure, monomer. Mg(2+) serves as cofactor. The cofactor is Mn(2+).

It catalyses the reaction D-threo-isocitrate + NADP(+) = 2-oxoglutarate + CO2 + NADPH. In terms of biological role, catalyzes the oxidative decarboxylation of isocitrate to 2-oxoglutarate and carbon dioxide with the concomitant reduction of NADP(+). This Corynebacterium efficiens (strain DSM 44549 / YS-314 / AJ 12310 / JCM 11189 / NBRC 100395) protein is Isocitrate dehydrogenase [NADP].